The following is a 520-amino-acid chain: Peptide chain release factor 3 (520 aa).

Positions 8-273 (ESRKTFAIIS…AYVDHAPMPN (266 aa)) constitute a tr-type G domain. Residues 17-24 (SHPDAGKT), 85-89 (DTPGH), and 139-142 (NKLD) contribute to the GTP site.

Belongs to the TRAFAC class translation factor GTPase superfamily. Classic translation factor GTPase family. PrfC subfamily.

Its subcellular location is the cytoplasm. Increases the formation of ribosomal termination complexes and stimulates activities of RF-1 and RF-2. It binds guanine nucleotides and has strong preference for UGA stop codons. It may interact directly with the ribosome. The stimulation of RF-1 and RF-2 is significantly reduced by GTP and GDP, but not by GMP. This is Peptide chain release factor 3 from Staphylococcus carnosus (strain TM300).